A 457-amino-acid polypeptide reads, in one-letter code: Ribosomal protein uS12 methylthiotransferase RimO (457 aa).

An MTTase N-terminal domain is found at 9–128 (KKVHFISLGC…ILKNSDEGEK (120 aa)). [4Fe-4S] cluster contacts are provided by cysteine 18, cysteine 54, cysteine 88, cysteine 163, cysteine 167, and cysteine 170. Positions 149–384 (SQPGHRAYLK…MEVQQNISRE (236 aa)) constitute a Radical SAM core domain. Residues 387 to 455 (SDFVGKTLQV…EYDLIGEIVV (69 aa)) form the TRAM domain.

This sequence belongs to the methylthiotransferase family. RimO subfamily. Requires [4Fe-4S] cluster as cofactor.

The protein resides in the cytoplasm. It carries out the reaction L-aspartate(89)-[ribosomal protein uS12]-hydrogen + (sulfur carrier)-SH + AH2 + 2 S-adenosyl-L-methionine = 3-methylsulfanyl-L-aspartate(89)-[ribosomal protein uS12]-hydrogen + (sulfur carrier)-H + 5'-deoxyadenosine + L-methionine + A + S-adenosyl-L-homocysteine + 2 H(+). Catalyzes the methylthiolation of an aspartic acid residue of ribosomal protein uS12. The sequence is that of Ribosomal protein uS12 methylthiotransferase RimO from Bdellovibrio bacteriovorus (strain ATCC 15356 / DSM 50701 / NCIMB 9529 / HD100).